The chain runs to 397 residues: Acetate kinase (397 aa).

Position 7 (Asn-7) interacts with Mg(2+). Lys-14 contacts ATP. Position 88 (Arg-88) interacts with substrate. The active-site Proton donor/acceptor is the Asp-145. ATP is bound by residues 205-209, 279-281, and 326-330; these read HLGNG, DMR, and GIGEN. Glu-380 is a binding site for Mg(2+).

The protein belongs to the acetokinase family. In terms of assembly, homodimer. It depends on Mg(2+) as a cofactor. The cofactor is Mn(2+).

The protein localises to the cytoplasm. It carries out the reaction acetate + ATP = acetyl phosphate + ADP. It functions in the pathway metabolic intermediate biosynthesis; acetyl-CoA biosynthesis; acetyl-CoA from acetate: step 1/2. Functionally, catalyzes the formation of acetyl phosphate from acetate and ATP. Can also catalyze the reverse reaction. The chain is Acetate kinase from Campylobacter concisus (strain 13826).